We begin with the raw amino-acid sequence, 441 residues long: Tubulin beta-1 chain (441 aa).

GTP-binding residues include Gln11, Glu69, Ser138, Gly142, Thr143, Gly144, Asn204, and Asn226. Position 69 (Glu69) interacts with Mg(2+).

This sequence belongs to the tubulin family. As to quaternary structure, dimer of alpha and beta chains. A typical microtubule is a hollow water-filled tube with an outer diameter of 25 nm and an inner diameter of 15 nM. Alpha-beta heterodimers associate head-to-tail to form protofilaments running lengthwise along the microtubule wall with the beta-tubulin subunit facing the microtubule plus end conferring a structural polarity. Microtubules usually have 13 protofilaments but different protofilament numbers can be found in some organisms and specialized cells. Requires Mg(2+) as cofactor. In terms of tissue distribution, expressed primarily in touch receptor neurons.

The protein localises to the cytoplasm. It is found in the cytoskeleton. In terms of biological role, TTubulin is the major constituent of microtubules, a cylinder consisting of laterally associated linear protofilaments composed of alpha- and beta-tubulin heterodimers. Microtubules grow by the addition of GTP-tubulin dimers to the microtubule end, where a stabilizing cap forms. Below the cap, tubulin dimers are in GDP-bound state, owing to GTPase activity of alpha-tubulin. Plays a role in mechanosensory transduction (touch sensitivity). Its function is as follows. Mec-7 beta-tubulin is required for the production of 15-protofilament microtubules. This Caenorhabditis elegans protein is Tubulin beta-1 chain (mec-7).